We begin with the raw amino-acid sequence, 356 residues long: Protein RecA (356 aa).

68–75 (GPESSGKT) contributes to the ATP binding site.

This sequence belongs to the RecA family.

It localises to the cytoplasm. Can catalyze the hydrolysis of ATP in the presence of single-stranded DNA, the ATP-dependent uptake of single-stranded DNA by duplex DNA, and the ATP-dependent hybridization of homologous single-stranded DNAs. It interacts with LexA causing its activation and leading to its autocatalytic cleavage. This chain is Protein RecA, found in Clostridium botulinum (strain Eklund 17B / Type B).